A 129-amino-acid chain; its full sequence is 3-aminoacrylate deaminase RutC (129 aa).

This sequence belongs to the RutC family.

It catalyses the reaction (Z)-3-aminoacrylate + H2O + H(+) = 3-oxopropanoate + NH4(+). Involved in pyrimidine catabolism. Catalyzes the deamination of 3-aminoacrylate to malonic semialdehyde, a reaction that can also occur spontaneously. RutC may facilitate the reaction and modulate the metabolic fitness, rather than catalyzing essential functions. The polypeptide is 3-aminoacrylate deaminase RutC (Caulobacter sp. (strain K31)).